We begin with the raw amino-acid sequence, 305 residues long: tRNA-cytidine(32) 2-sulfurtransferase (305 aa).

The interval 1 to 20 (MTAVLPLPHPLADPAPRDPR) is disordered. The PP-loop motif motif lies at 59–64 (SGGKDS). [4Fe-4S] cluster-binding residues include Cys-134, Cys-137, and Cys-225. Low complexity predominate over residues 282 to 293 (DAPPDLAPDPGA). The disordered stretch occupies residues 282–305 (DAPPDLAPDPGAWLTASDATHDSD).

The protein belongs to the TtcA family. As to quaternary structure, homodimer. Mg(2+) is required as a cofactor. It depends on [4Fe-4S] cluster as a cofactor.

It localises to the cytoplasm. The catalysed reaction is cytidine(32) in tRNA + S-sulfanyl-L-cysteinyl-[cysteine desulfurase] + AH2 + ATP = 2-thiocytidine(32) in tRNA + L-cysteinyl-[cysteine desulfurase] + A + AMP + diphosphate + H(+). Its pathway is tRNA modification. Catalyzes the ATP-dependent 2-thiolation of cytidine in position 32 of tRNA, to form 2-thiocytidine (s(2)C32). The sulfur atoms are provided by the cysteine/cysteine desulfurase (IscS) system. This chain is tRNA-cytidine(32) 2-sulfurtransferase, found in Xanthomonas oryzae pv. oryzae (strain MAFF 311018).